Consider the following 874-residue polypeptide: Alanine--tRNA ligase (874 aa).

Residues His562, His566, Cys665, and His669 each contribute to the Zn(2+) site.

This sequence belongs to the class-II aminoacyl-tRNA synthetase family. Requires Zn(2+) as cofactor.

Its subcellular location is the cytoplasm. It catalyses the reaction tRNA(Ala) + L-alanine + ATP = L-alanyl-tRNA(Ala) + AMP + diphosphate. Catalyzes the attachment of alanine to tRNA(Ala) in a two-step reaction: alanine is first activated by ATP to form Ala-AMP and then transferred to the acceptor end of tRNA(Ala). Also edits incorrectly charged Ser-tRNA(Ala) and Gly-tRNA(Ala) via its editing domain. In Pseudomonas putida (strain W619), this protein is Alanine--tRNA ligase.